The chain runs to 437 residues: Elongation factor 1-gamma (437 aa).

Residue Ala2 is modified to N-acetylalanine. The GST N-terminal domain occupies 2-87 (AAGTLYTYPE…YVSNEELRGS (86 aa)). The 129-residue stretch at 88–216 (TPEAAAQVVQ…VKLCEKMAQF (129 aa)) folds into the GST C-terminal domain. An N6-acetyllysine mark is found at Lys147 and Lys212. Basic and acidic residues predominate over residues 221-254 (FAETQPKKDTPRKEKGSREEKQKPQAERKEEKKA). The tract at residues 221–268 (FAETQPKKDTPRKEKGSREEKQKPQAERKEEKKAAAPAPEEEMDECEQ) is disordered. Lys253 participates in a covalent cross-link: Glycyl lysine isopeptide (Lys-Gly) (interchain with G-Cter in SUMO1). Positions 276–437 (AKDPFAHLPK…KAFNQGKIFK (162 aa)) constitute an EF-1-gamma C-terminal domain. Residue Lys285 forms a Glycyl lysine isopeptide (Lys-Gly) (interchain with G-Cter in SUMO2) linkage. Residue Lys401 is modified to N6-acetyllysine. At Lys434 the chain carries N6-acetyllysine; alternate. The residue at position 434 (Lys434) is an N6-malonyllysine; alternate.

As to quaternary structure, EF-1 is composed of four subunits: alpha, beta, delta, and gamma.

Its function is as follows. Probably plays a role in anchoring the complex to other cellular components. The sequence is that of Elongation factor 1-gamma (EEF1G) from Macaca fascicularis (Crab-eating macaque).